A 236-amino-acid chain; its full sequence is tRNA1(Val) (adenine(37)-N6)-methyltransferase (236 aa).

It belongs to the methyltransferase superfamily. tRNA (adenine-N(6)-)-methyltransferase family.

Its subcellular location is the cytoplasm. The enzyme catalyses adenosine(37) in tRNA1(Val) + S-adenosyl-L-methionine = N(6)-methyladenosine(37) in tRNA1(Val) + S-adenosyl-L-homocysteine + H(+). In terms of biological role, specifically methylates the adenine in position 37 of tRNA(1)(Val) (anticodon cmo5UAC). The chain is tRNA1(Val) (adenine(37)-N6)-methyltransferase from Histophilus somni (strain 2336) (Haemophilus somnus).